We begin with the raw amino-acid sequence, 530 residues long: Calnexin homolog 1 (530 aa).

The first 20 residues, 1–20 (MRQRQLFSVFLLLLAFVSFQ), serve as a signal peptide directing secretion. Residues 21 to 466 (KLCYCDDQTV…EKAEQQPNLT (446 aa)) are Lumenal-facing. Residues S34 and D65 each coordinate Ca(2+). C108 and C143 form a disulfide bridge. Residues Y112, K114, Y134, and D141 each contribute to the an alpha-D-glucoside site. Positions 216–315 (ALIPAKTIPD…KCEAAPGCGE (100 aa)) are disordered. Residues 223–356 (IPDPEDKKPE…RDIPNPDYFE (134 aa)) are p domain (Extended arm). Positions 224–240 (PDPEDKKPEDWDERAKI) are enriched in basic and acidic residues. Tandem repeats lie at residues 225–236 (DPEDKKPEDWDE), 242–253 (DPNAVKPEDWDE), 261–272 (DEEAEKPEGWLD), 280–291 (DPEATKPEDWDD), and 295–305 (GMWEAPKIDNP). 4 X approximate repeats stretches follow at residues 225–291 (DPED…DWDD) and 295–352 (GMWE…IPNP). Over residues 250-281 (DWDEDAPMEIEDEEAEKPEGWLDDEPEEVDDP) the composition is skewed to acidic residues. C307 and C313 form a disulfide bridge. 3 tandem repeats follow at residues 314–324 (GEWKRPMKRNP), 328–338 (GKWSSPLIDNP), and 342–352 (GIWKPRDIPNP). Position 371 (E371) interacts with an alpha-D-glucoside. D382 contributes to the Ca(2+) binding site. Residue N464 is glycosylated (N-linked (GlcNAc...) asparagine). A helical membrane pass occupies residues 467–487 (IGVLVAIVVVFFSLFLKLIFG). The Cytoplasmic segment spans residues 488-530 (GKKAAAPVEKKKPEVAESSKSGDEAEKKEETAAPRKRQPRRDN). The tract at residues 490-530 (KAAAPVEKKKPEVAESSKSGDEAEKKEETAAPRKRQPRRDN) is disordered. Residues 495–520 (VEKKKPEVAESSKSGDEAEKKEETAA) are compositionally biased toward basic and acidic residues. Position 508 is a phosphoserine (S508). Positions 521–530 (PRKRQPRRDN) are enriched in basic residues.

The protein belongs to the calreticulin family.

It is found in the endoplasmic reticulum membrane. Functionally, calcium-binding protein that interacts with newly synthesized monoglucosylated glycoproteins in the endoplasmic reticulum. It may act in assisting protein assembly and/or in the retention within the ER of unassembled protein subunits. It seems to play a major role in the quality control apparatus of the ER by the retention of incorrectly folded proteins. The polypeptide is Calnexin homolog 1 (CNX1) (Arabidopsis thaliana (Mouse-ear cress)).